A 400-amino-acid polypeptide reads, in one-letter code: CCA-adding enzyme (400 aa).

ATP is bound by residues glycine 28 and arginine 31. CTP is bound by residues glycine 28 and arginine 31. The Mg(2+) site is built by aspartate 41 and aspartate 43. ATP-binding residues include arginine 112, aspartate 155, arginine 158, arginine 161, and arginine 164. CTP contacts are provided by arginine 112, aspartate 155, arginine 158, arginine 161, and arginine 164.

Belongs to the tRNA nucleotidyltransferase/poly(A) polymerase family. Bacterial CCA-adding enzyme type 3 subfamily. Homodimer. The cofactor is Mg(2+).

It catalyses the reaction a tRNA precursor + 2 CTP + ATP = a tRNA with a 3' CCA end + 3 diphosphate. It carries out the reaction a tRNA with a 3' CCA end + 2 CTP + ATP = a tRNA with a 3' CCACCA end + 3 diphosphate. Functionally, catalyzes the addition and repair of the essential 3'-terminal CCA sequence in tRNAs without using a nucleic acid template. Adds these three nucleotides in the order of C, C, and A to the tRNA nucleotide-73, using CTP and ATP as substrates and producing inorganic pyrophosphate. tRNA 3'-terminal CCA addition is required both for tRNA processing and repair. Also involved in tRNA surveillance by mediating tandem CCA addition to generate a CCACCA at the 3' terminus of unstable tRNAs. While stable tRNAs receive only 3'-terminal CCA, unstable tRNAs are marked with CCACCA and rapidly degraded. This Staphylococcus aureus (strain Mu3 / ATCC 700698) protein is CCA-adding enzyme.